A 156-amino-acid chain; its full sequence is Ribosome maturation factor RimP (156 aa).

The protein belongs to the RimP family.

The protein localises to the cytoplasm. Required for maturation of 30S ribosomal subunits. This is Ribosome maturation factor RimP from Lachnospira eligens (strain ATCC 27750 / DSM 3376 / VPI C15-48 / C15-B4) (Eubacterium eligens).